Here is a 230-residue protein sequence, read N- to C-terminus: Phosphoribosylformylglycinamidine synthase subunit PurQ (230 aa).

The 225-residue stretch at 2 to 226 (RVAVIVFPGS…LKTWREQNSV (225 aa)) folds into the Glutamine amidotransferase type-1 domain. Cysteine 86 acts as the Nucleophile in catalysis. Catalysis depends on residues histidine 195 and glutamate 197.

In terms of assembly, part of the FGAM synthase complex composed of 1 PurL, 1 PurQ and 2 PurS subunits.

The protein localises to the cytoplasm. It carries out the reaction N(2)-formyl-N(1)-(5-phospho-beta-D-ribosyl)glycinamide + L-glutamine + ATP + H2O = 2-formamido-N(1)-(5-O-phospho-beta-D-ribosyl)acetamidine + L-glutamate + ADP + phosphate + H(+). It catalyses the reaction L-glutamine + H2O = L-glutamate + NH4(+). Its pathway is purine metabolism; IMP biosynthesis via de novo pathway; 5-amino-1-(5-phospho-D-ribosyl)imidazole from N(2)-formyl-N(1)-(5-phospho-D-ribosyl)glycinamide: step 1/2. Part of the phosphoribosylformylglycinamidine synthase complex involved in the purines biosynthetic pathway. Catalyzes the ATP-dependent conversion of formylglycinamide ribonucleotide (FGAR) and glutamine to yield formylglycinamidine ribonucleotide (FGAM) and glutamate. The FGAM synthase complex is composed of three subunits. PurQ produces an ammonia molecule by converting glutamine to glutamate. PurL transfers the ammonia molecule to FGAR to form FGAM in an ATP-dependent manner. PurS interacts with PurQ and PurL and is thought to assist in the transfer of the ammonia molecule from PurQ to PurL. This is Phosphoribosylformylglycinamidine synthase subunit PurQ from Brevibacillus brevis (strain 47 / JCM 6285 / NBRC 100599).